A 214-amino-acid chain; its full sequence is Ribosomal RNA small subunit methyltransferase G (214 aa).

Residues Gly81, Met86, 132 to 133 (VE), and Arg147 each bind S-adenosyl-L-methionine.

Belongs to the methyltransferase superfamily. RNA methyltransferase RsmG family.

The protein localises to the cytoplasm. It carries out the reaction guanosine(527) in 16S rRNA + S-adenosyl-L-methionine = N(7)-methylguanosine(527) in 16S rRNA + S-adenosyl-L-homocysteine. In terms of biological role, specifically methylates the N7 position of guanine in position 527 of 16S rRNA. The polypeptide is Ribosomal RNA small subunit methyltransferase G (Pseudomonas aeruginosa (strain LESB58)).